Here is a 343-residue protein sequence, read N- to C-terminus: Phosphatidylglycerol--prolipoprotein diacylglyceryl transferase (343 aa).

The next 4 membrane-spanning stretches (helical) occupy residues 22–42, 54–74, 97–117, and 123–143; these read IPIR…LIIG, GVIY…GRLY, VWEG…GAWI, and GIPL…AQAI. A 1,2-diacyl-sn-glycero-3-phospho-(1'-sn-glycerol) is bound at residue Arg145. 2 helical membrane-spanning segments follow: residues 193-213 and 257-277; these read VVHP…VLLI and VNSF…LLAP. The tract at residues 283-343 is disordered; the sequence is PATLGGTPSS…SADNSGIVEK (61 aa). The span at 295 to 325 shows a compositional bias: acidic residues; that stretch reads GGDDTAETEATADTEDTEDTEDGVTDAPEAD.

The protein belongs to the Lgt family.

The protein localises to the cell membrane. The catalysed reaction is L-cysteinyl-[prolipoprotein] + a 1,2-diacyl-sn-glycero-3-phospho-(1'-sn-glycerol) = an S-1,2-diacyl-sn-glyceryl-L-cysteinyl-[prolipoprotein] + sn-glycerol 1-phosphate + H(+). It functions in the pathway protein modification; lipoprotein biosynthesis (diacylglyceryl transfer). In terms of biological role, catalyzes the transfer of the diacylglyceryl group from phosphatidylglycerol to the sulfhydryl group of the N-terminal cysteine of a prolipoprotein, the first step in the formation of mature lipoproteins. The protein is Phosphatidylglycerol--prolipoprotein diacylglyceryl transferase of Mycobacteroides abscessus (strain ATCC 19977 / DSM 44196 / CCUG 20993 / CIP 104536 / JCM 13569 / NCTC 13031 / TMC 1543 / L948) (Mycobacterium abscessus).